The primary structure comprises 349 residues: Protein RecA (349 aa).

67–74 is a binding site for ATP; the sequence is GPESSGKT.

The protein belongs to the RecA family.

The protein localises to the cytoplasm. Can catalyze the hydrolysis of ATP in the presence of single-stranded DNA, the ATP-dependent uptake of single-stranded DNA by duplex DNA, and the ATP-dependent hybridization of homologous single-stranded DNAs. It interacts with LexA causing its activation and leading to its autocatalytic cleavage. The sequence is that of Protein RecA from Chlamydia abortus (strain DSM 27085 / S26/3) (Chlamydophila abortus).